A 1066-amino-acid polypeptide reads, in one-letter code: FHIP family protein GI14169 (1066 aa).

The segment covering Met-1–Gln-11 has biased composition (polar residues). Positions Met-1–Pro-35 are disordered. Residues Ser-12–Thr-30 show a composition bias toward low complexity. Ser-500 is modified (phosphoserine). The segment at Gly-651 to Asp-682 is disordered. Residues Thr-655–Ser-678 are compositionally biased toward low complexity. Ser-820 bears the Phosphoserine mark. Disordered regions lie at residues Pro-821–Ala-913 and Ser-935–Phe-1007. The span at Leu-822–Gln-855 shows a compositional bias: low complexity. The segment covering Arg-856–Ser-874 has biased composition (polar residues). The segment covering Ser-890–Ala-913 has biased composition (low complexity). Positions Gln-947–Val-971 are enriched in polar residues. A compositionally biased stretch (low complexity) spans Gly-972–Gly-997.

This sequence belongs to the FHIP family.

This chain is FHIP family protein GI14169, found in Drosophila mojavensis (Fruit fly).